A 413-amino-acid chain; its full sequence is MTTEHLSQQRFADLPLHPQILAALNDQNFEYCTPIQALSLPLTLQGKDVAGQAQTGTGKTMAFLTATFHHLLTHQPDFITNQPRALILAPTRELAVQIAHDAESLAQTTKLRIALAYGGDGYDKQLKTIENGVDILIGTTGRVIDYVKQGIIRFNDIQVVVLDEADRMFDLGFIKDIRYLLRKCPAPKSRLTMLFSATLSYKVRELAFEDMNDPEYIEIEPLQKTGHRIKEELFYPSNRDKMALLMTLLEEEWPERCIIFANTKHRCEEIWGYLAADGQRVGLLTGDVAQKKRLALLKQFTDGELDILVATDVAARGLHIPDVTHVFNYDLPDDREDYVHRIGRTGRAGESGMSISFACEQYAMNLPAIEEYIGHHIPVSQYDPDSLINDLPKPYRIKRNHTIPHSSRDYKKR.

Residues 9–37 (QRFADLPLHPQILAALNDQNFEYCTPIQA) carry the Q motif motif. The Helicase ATP-binding domain maps to 40–217 (LPLTLQGKDV…FEDMNDPEYI (178 aa)). Position 53 to 60 (53 to 60 (AQTGTGKT)) interacts with ATP. The DEAD box motif lies at 163 to 166 (DEAD). Residues 241 to 388 (KMALLMTLLE…VSQYDPDSLI (148 aa)) form the Helicase C-terminal domain.

It belongs to the DEAD box helicase family. RhlB subfamily. Component of the RNA degradosome, which is a multiprotein complex involved in RNA processing and mRNA degradation.

It localises to the cytoplasm. The enzyme catalyses ATP + H2O = ADP + phosphate + H(+). Functionally, DEAD-box RNA helicase involved in RNA degradation. Has RNA-dependent ATPase activity and unwinds double-stranded RNA. In Actinobacillus succinogenes (strain ATCC 55618 / DSM 22257 / CCUG 43843 / 130Z), this protein is ATP-dependent RNA helicase RhlB.